The primary structure comprises 401 residues: Imidazolonepropionase (401 aa).

Fe(3+)-binding residues include H66 and H68. Residues H66 and H68 each contribute to the Zn(2+) site. 4-imidazolone-5-propanoate contacts are provided by R75, Y138, and H171. An N-formimidoyl-L-glutamate-binding site is contributed by Y138. H236 contributes to the Fe(3+) binding site. H236 contributes to the Zn(2+) binding site. Position 239 (Q239) interacts with 4-imidazolone-5-propanoate. Residue D311 coordinates Fe(3+). Residue D311 participates in Zn(2+) binding. N-formimidoyl-L-glutamate is bound by residues N313 and G315. T316 serves as a coordination point for 4-imidazolone-5-propanoate.

This sequence belongs to the metallo-dependent hydrolases superfamily. HutI family. It depends on Zn(2+) as a cofactor. Fe(3+) is required as a cofactor.

It localises to the cytoplasm. The catalysed reaction is 4-imidazolone-5-propanoate + H2O = N-formimidoyl-L-glutamate. Its pathway is amino-acid degradation; L-histidine degradation into L-glutamate; N-formimidoyl-L-glutamate from L-histidine: step 3/3. In terms of biological role, catalyzes the hydrolytic cleavage of the carbon-nitrogen bond in imidazolone-5-propanoate to yield N-formimidoyl-L-glutamate. It is the third step in the universal histidine degradation pathway. The protein is Imidazolonepropionase of Pseudomonas syringae pv. tomato (strain ATCC BAA-871 / DC3000).